Consider the following 251-residue polypeptide: uncharacterized protein (251 aa).

The segment at 1–22 is disordered; that stretch reads MTQLPELGLRSPNNKSPTGPHP.

This is an uncharacterized protein from Homo sapiens (Human).